A 417-amino-acid polypeptide reads, in one-letter code: Nucleosome assembly protein (417 aa).

A disordered region spans residues 1–47 (MSDPIRTKPKSSMQIDNAPTPHNTPASVLNPSYLKNGNPVRAQAQEQ). Polar residues predominate over residues 10-35 (KSSMQIDNAPTPHNTPASVLNPSYLK). A phosphothreonine mark is found at Thr20 and Thr24. At Ser27 the chain carries Phosphoserine. A Glycyl lysine isopeptide (Lys-Gly) (interchain with G-Cter in ubiquitin) cross-link involves residue Lys50. Thr53 carries the post-translational modification Phosphothreonine. Ser69, Ser76, Ser82, Ser98, Ser104, and Ser140 each carry phosphoserine. Positions 143 to 362 (EQPKPEQIAK…IPRAVDWFTG (220 aa)) are interaction with NBA1. Phosphoserine; by CK2 is present on residues Ser159 and Ser177. The H-T-H motif DNA-binding region spans 330 to 356 (LEEDLEERLALDYSIGEQLKDKLIPRA). The disordered stretch occupies residues 364–417 (ALEFEFEEDEEEADEDEDEEEDDDHGLEDDDGESAEEQDDFAGRPEQAPECKQS). Positions 367–403 (FEFEEDEEEADEDEDEEEDDDHGLEDDDGESAEEQDD) are enriched in acidic residues. A Phosphoserine; by CK2 modification is found at Ser397. Residues 404 to 417 (FAGRPEQAPECKQS) are compositionally biased toward basic and acidic residues.

The protein belongs to the nucleosome assembly protein (NAP) family. In terms of assembly, component of the GIN4 complex composed of at least BNI5, CDC3, CDC10, CDC11, CDC12, GIN4, NAP1 and SHS1 which forms a ring at the bud neck. Homodimer (in-vitro). Interacts with the B-type cyclin CLB2. Interacts with 60S ribosomal protein L18 (RPL18A or RPL18B), CKA2, CKI1, eukaryotic elongation factor 1 complex eEF1A (TEF1 or TEF2), FOL1, HSC82, HTA2, HTB2, HTZ1, KAP114, KCC4, NIS1, SSA1, SSA2, SSB1, SSC1, SHM1, SIP5 and TCO89. Interacts with NBA1. Interacts with histone H3/H4 heterodimers. In terms of processing, phosphorylation by CK2 is required for normal progression through S phase. CK2 phosphorylation is not required for correct bud formation nor histone binding.

It localises to the cytoplasm. The protein localises to the nucleus. Its subcellular location is the bud neck. Its function is as follows. Acidic protein, which assembles histones into an octamer (in vitro). Involved in the regulation of the localization and the function of the septins during mitosis. Involved in the function of B-type cyclins. This Saccharomyces cerevisiae (strain ATCC 204508 / S288c) (Baker's yeast) protein is Nucleosome assembly protein.